Reading from the N-terminus, the 265-residue chain is Thioredoxin-related transmembrane protein 2 homolog (265 aa).

The signal sequence occupies residues 1-32 (MLIPRLDEVRRALTAFHFFNTLLALAFPVIRS). The Extracellular portion of the chain corresponds to 33 to 96 (TSLCDYVFAV…KIAGMFLFIR (64 aa)). The chain crosses the membrane as a helical span at residues 97 to 117 (ADILPGIIYILACLIVTVLFP). Over 118–265 (EPVYNGPEQV…KKGAKAKKED (148 aa)) the chain is Cytoplasmic. The Thioredoxin domain occupies 126–230 (QVTYFQGEQL…RPLVNDSRRA (105 aa)). The Di-lysine motif motif lies at 262 to 265 (KKED).

It is found in the membrane. This is Thioredoxin-related transmembrane protein 2 homolog from Caenorhabditis elegans.